Reading from the N-terminus, the 62-residue chain is Large ribosomal subunit protein uL30 (62 aa).

This sequence belongs to the universal ribosomal protein uL30 family. As to quaternary structure, part of the 50S ribosomal subunit.

The protein is Large ribosomal subunit protein uL30 of Shouchella clausii (strain KSM-K16) (Alkalihalobacillus clausii).